The following is a 51-amino-acid chain: Large ribosomal subunit protein eL39 (51 aa).

Residues 32–51 (KGSVKQHPKMRHWRRNTLKK) are disordered. The segment covering 33-51 (GSVKQHPKMRHWRRNTLKK) has biased composition (basic residues).

The protein belongs to the eukaryotic ribosomal protein eL39 family.

This Methanococcus vannielii (strain ATCC 35089 / DSM 1224 / JCM 13029 / OCM 148 / SB) protein is Large ribosomal subunit protein eL39.